The primary structure comprises 256 residues: Pimeloyl-[acyl-carrier protein] methyl ester esterase (256 aa).

Residues 16–240 (LVILHGWGVN…PKASHAPFLS (225 aa)) enclose the AB hydrolase-1 domain. Substrate is bound by residues Trp22, 80–81 (SL), and 143–147 (FLAIQ). Ser80 serves as the catalytic Nucleophile. Residues Asp207 and His235 contribute to the active site. Position 235 (His235) interacts with substrate.

Belongs to the AB hydrolase superfamily. Carboxylesterase BioH family. As to quaternary structure, monomer.

The protein localises to the cytoplasm. The enzyme catalyses 6-carboxyhexanoyl-[ACP] methyl ester + H2O = 6-carboxyhexanoyl-[ACP] + methanol + H(+). It participates in cofactor biosynthesis; biotin biosynthesis. Its function is as follows. The physiological role of BioH is to remove the methyl group introduced by BioC when the pimeloyl moiety is complete. It allows to synthesize pimeloyl-ACP via the fatty acid synthetic pathway through the hydrolysis of the ester bonds of pimeloyl-ACP esters. The sequence is that of Pimeloyl-[acyl-carrier protein] methyl ester esterase from Shewanella woodyi (strain ATCC 51908 / MS32).